A 287-amino-acid chain; its full sequence is Inorganic pyrophosphatase (287 aa).

Arg79 is a binding site for diphosphate. Mg(2+) contacts are provided by Asp116, Asp121, and Asp153.

This sequence belongs to the PPase family. Mg(2+) is required as a cofactor.

It localises to the cytoplasm. The catalysed reaction is diphosphate + H2O = 2 phosphate + H(+). This chain is Inorganic pyrophosphatase (IPP1), found in Candida glabrata (strain ATCC 2001 / BCRC 20586 / JCM 3761 / NBRC 0622 / NRRL Y-65 / CBS 138) (Yeast).